Consider the following 130-residue polypeptide: Small ribosomal subunit protein uS9 (130 aa).

The protein belongs to the universal ribosomal protein uS9 family.

This Halalkalibacterium halodurans (strain ATCC BAA-125 / DSM 18197 / FERM 7344 / JCM 9153 / C-125) (Bacillus halodurans) protein is Small ribosomal subunit protein uS9.